The sequence spans 422 residues: DNA-binding transcriptional activator AdeR (422 aa).

It belongs to the CdaR family.

In terms of biological role, activates ald expression in response to alanine availability and is important for normal sporulation in B.subtilis. The sequence is that of DNA-binding transcriptional activator AdeR from Bacillus subtilis (strain 168).